Consider the following 516-residue polypeptide: Protein P54 (516 aa).

Residues 1–27 (MKKSLLSAVMLSSIALTAVGSPIAAAA) form the signal peptide. The tract at residues 208-397 (ATAEDKKADL…PAPAPAPNPS (190 aa)) is disordered. Over residues 210-236 (AEDKKADLNRKKAEAEAEQARIREQAR) the composition is skewed to basic and acidic residues. Low complexity-rich tracts occupy residues 237 to 247 (LAEQARQQAAQ) and 257 to 380 (QAAA…TVTP). A compositionally biased stretch (pro residues) spans 381-395 (APTPTPTPAPAPAPN). Positions 399–516 (SVNGAAIVAE…WYTPDFAVSM (118 aa)) constitute a NlpC/P60 domain. The active-site Nucleophile is the C429. Residue H480 is the Proton acceptor of the active site. H492 is an active-site residue.

This sequence belongs to the peptidase C40 family.

The protein resides in the secreted. Its subcellular location is the cell wall. This chain is Protein P54, found in Enterococcus faecium (Streptococcus faecium).